A 201-amino-acid polypeptide reads, in one-letter code: LexA repressor 1 (201 aa).

A DNA-binding region (H-T-H motif) is located at residues 28 to 48 (LREIAAHLKISGTLGVSKHLE). Residues Ser120 and Lys157 each act as for autocatalytic cleavage activity in the active site.

This sequence belongs to the peptidase S24 family. As to quaternary structure, homodimer.

The catalysed reaction is Hydrolysis of Ala-|-Gly bond in repressor LexA.. Functionally, represses a number of genes involved in the response to DNA damage (SOS response), including recA and lexA. In the presence of single-stranded DNA, RecA interacts with LexA causing an autocatalytic cleavage which disrupts the DNA-binding part of LexA, leading to derepression of the SOS regulon and eventually DNA repair. The chain is LexA repressor 1 from Geobacter sulfurreducens (strain ATCC 51573 / DSM 12127 / PCA).